Reading from the N-terminus, the 317-residue chain is Putative ribosomal protein uL10-like (317 aa).

The residue at position 24 (tyrosine 24) is a Phosphotyrosine. Threonine 59 carries the phosphothreonine modification. Residues 292-317 (AAAPAKVEAKEESEESDEDMGFGLFD) form a disordered region. Lysine 297 participates in a covalent cross-link: Glycyl lysine isopeptide (Lys-Gly) (interchain with G-Cter in SUMO1); alternate. A Glycyl lysine isopeptide (Lys-Gly) (interchain with G-Cter in SUMO2); alternate cross-link involves residue lysine 297. Residues 302–311 (EESEESDEDM) show a composition bias toward acidic residues. Phosphoserine occurs at positions 304 and 307.

The protein belongs to the universal ribosomal protein uL10 family. P0 forms a pentameric complex by interaction with dimers of P1 and P2.

Functionally, ribosomal protein P0 is the functional equivalent of E.coli protein L10. The polypeptide is Putative ribosomal protein uL10-like (RPLP0P6) (Homo sapiens (Human)).